A 571-amino-acid chain; its full sequence is UvrABC system protein C (571 aa).

In terms of domain architecture, GIY-YIG spans Thr-15–Ile-93. One can recognise a UVR domain in the interval Asn-184–Leu-219.

Belongs to the UvrC family. As to quaternary structure, interacts with UvrB in an incision complex.

It is found in the cytoplasm. Functionally, the UvrABC repair system catalyzes the recognition and processing of DNA lesions. UvrC both incises the 5' and 3' sides of the lesion. The N-terminal half is responsible for the 3' incision and the C-terminal half is responsible for the 5' incision. This is UvrABC system protein C from Mycoplasmopsis bovis (strain ATCC 25523 / DSM 22781 / NCTC 10131 / PG45) (Mycoplasma bovis).